The primary structure comprises 520 residues: L-tyrosine:2-oxoglutarate aminotransferase amt1 (520 aa).

Belongs to the class-I pyridoxal-phosphate-dependent aminotransferase family. Requires pyridoxal 5'-phosphate as cofactor.

The catalysed reaction is L-tyrosine + 2-oxoglutarate = 3-(4-hydroxyphenyl)pyruvate + L-glutamate. It functions in the pathway secondary metabolite biosynthesis. Functionally, an L-tyrosine:2-oxoglutarate aminotransferase (probably amt1) and atromentin synthetase nps3 catalyze consecutive steps to turn over L-tyrosine into atromentin, which represents the generic precursor molecule for the entire terphenylquinone and pulvinic acid family of pigments, which are widely distributed secondary metabolites in homobasidiomycetes. The first step catalyzed by amt1 converts L-tyrosine in to 4-hydroxyphenylpyruvate (4-HPP). Adenylation of two 4-HPP monomers by the nps3 adenylation (A) domain, covalent tethering of the monomers as a thioester and oxoester onto the nps3 thiolation (T) and thioesterase (TE) domains, respectively, and symmetric C-C-bond formation between two monomers catalyzed by the nps3 TE domain leads to atromentin. Follow-up products of atromentin in S.lacrymans include atromentic acid, xerocomic acid, isoxerocomic acid and variegatic acid. The chain is L-tyrosine:2-oxoglutarate aminotransferase amt1 (amt1) from Serpula lacrymans var. lacrymans (strain S7.9) (Dry rot fungus).